Here is a 503-residue protein sequence, read N- to C-terminus: Cytochrome P450 monooxygenase roqO (503 aa).

Residues 11–31 form a helical membrane-spanning segment; sequence YSGTACAISLFIFGITLLFPF. N-linked (GlcNAc...) asparagine glycosylation is present at N205. C444 provides a ligand contact to heme.

The protein belongs to the cytochrome P450 family. It depends on heme as a cofactor.

The protein localises to the membrane. Its pathway is alkaloid biosynthesis. Functionally, cytochrome P450 monooxygenase; part of the gene cluster that mediates the biosynthesis of the mycotoxin meleagrin. The first stage is catalyzed by the dipeptide synthase roqA which condenses histidine and tryptophan to produce histidyltryptophanyldiketopiperazine (HTD). HTD is then converted to roquefortine C through two possible pathways. In the first pathway, prenyltransferase roqD transforms HTD to the intermediate roquefortine D, which is in turn converted to roquefortine C by the cytochrome P450 monooxygenase roqR. In the second pathway, HTD is first converted to the intermediate dehydrohistidyltryptophanyldi-ketopiperazine (DHTD) by roqR which is then prenylated by roqD to form roquefortine C. Roquefortine C can be further transformed to meleagrin via three more reactions including oxydation to glandicolin A by roqM, which is further reduced to glandicoline B by roqO. Finally, glandicoline B is converted to meleagrin by the glandicoline B O-methyltransferase roqN. More studies identified further branching and additional metabolites produced by the roquefortine/meleagrin cluster, including roquefortine F, roquefortine L, roquefortine M, roquefortine N and neoxaline. This chain is Cytochrome P450 monooxygenase roqO, found in Penicillium rubens (strain ATCC 28089 / DSM 1075 / NRRL 1951 / Wisconsin 54-1255) (Penicillium chrysogenum).